The following is a 395-amino-acid chain: Thyroid hormone receptor beta (395 aa).

The segment at 1–31 (MSEPAENCSPRWKDEAIQNGYIPSYLDKDEL) is modulating. Positions 32, 35, 49, 52, 70, 76, 86, and 89 each coordinate Zn(2+). NR C4-type zinc fingers lie at residues 32-52 (CVVC…CEGC) and 70-94 (CKYE…FKKC). Residues 32–99 (CVVCGDKATG…RFKKCIAVGM (68 aa)) constitute a DNA-binding region (nuclear receptor). The NR LBD domain maps to 142–395 (EEWDLIRMVT…PPLFLEVFED (254 aa)). 3,3',5-triiodo-L-thyronine contacts are provided by arginine 216, asparagine 265, and histidine 369. Positions 216, 265, and 369 each coordinate L-thyroxine.

Belongs to the nuclear hormone receptor family. NR1 subfamily.

The protein localises to the nucleus. Functionally, nuclear hormone receptor that can act as a repressor or activator of transcription. High affinity receptor for thyroid hormones, including triiodothyronine and thyroxine. This chain is Thyroid hormone receptor beta (thrb), found in Paralichthys olivaceus (Bastard halibut).